The chain runs to 121 residues: Large ribosomal subunit protein bL12 (121 aa).

The protein belongs to the bacterial ribosomal protein bL12 family. In terms of assembly, homodimer. Part of the ribosomal stalk of the 50S ribosomal subunit. Forms a multimeric L10(L12)X complex, where L10 forms an elongated spine to which 2 to 4 L12 dimers bind in a sequential fashion. Binds GTP-bound translation factors.

Forms part of the ribosomal stalk which helps the ribosome interact with GTP-bound translation factors. Is thus essential for accurate translation. The polypeptide is Large ribosomal subunit protein bL12 (Pectobacterium carotovorum subsp. carotovorum (strain PC1)).